The following is a 632-amino-acid chain: 1-deoxy-D-xylulose-5-phosphate synthase (632 aa).

Thiamine diphosphate contacts are provided by residues H72 and 113-115; that span reads GHA. D144 lines the Mg(2+) pocket. Residues 145-146, N174, Y285, and E368 each bind thiamine diphosphate; that span reads GA. N174 lines the Mg(2+) pocket.

The protein belongs to the transketolase family. DXPS subfamily. Homodimer. The cofactor is Mg(2+). It depends on thiamine diphosphate as a cofactor.

It catalyses the reaction D-glyceraldehyde 3-phosphate + pyruvate + H(+) = 1-deoxy-D-xylulose 5-phosphate + CO2. It functions in the pathway metabolic intermediate biosynthesis; 1-deoxy-D-xylulose 5-phosphate biosynthesis; 1-deoxy-D-xylulose 5-phosphate from D-glyceraldehyde 3-phosphate and pyruvate: step 1/1. Catalyzes the acyloin condensation reaction between C atoms 2 and 3 of pyruvate and glyceraldehyde 3-phosphate to yield 1-deoxy-D-xylulose-5-phosphate (DXP). This Cyanothece sp. (strain PCC 7425 / ATCC 29141) protein is 1-deoxy-D-xylulose-5-phosphate synthase.